The sequence spans 161 residues: Lipoprotein signal peptidase (161 aa).

2 helical membrane passes run 64 to 84 (YRVPFFIITTSVAVVFLAWFY) and 92 to 114 (VLGRCAVSLVLGGAIGNLIDRVR). Catalysis depends on residues D120 and D138. Residues 131–151 (WPAFNVADSAICVGVGMLLLA) form a helical membrane-spanning segment.

The protein belongs to the peptidase A8 family.

It localises to the cell inner membrane. It catalyses the reaction Release of signal peptides from bacterial membrane prolipoproteins. Hydrolyzes -Xaa-Yaa-Zaa-|-(S,diacylglyceryl)Cys-, in which Xaa is hydrophobic (preferably Leu), and Yaa (Ala or Ser) and Zaa (Gly or Ala) have small, neutral side chains.. The protein operates within protein modification; lipoprotein biosynthesis (signal peptide cleavage). In terms of biological role, this protein specifically catalyzes the removal of signal peptides from prolipoproteins. The sequence is that of Lipoprotein signal peptidase from Syntrophotalea carbinolica (strain DSM 2380 / NBRC 103641 / GraBd1) (Pelobacter carbinolicus).